The primary structure comprises 279 residues: Thymidylate synthase (279 aa).

DUMP is bound at residue Arg-21. Residue His-51 coordinates (6R)-5,10-methylene-5,6,7,8-tetrahydrofolate. 126–127 (RR) provides a ligand contact to dUMP. The active-site Nucleophile is Cys-159. Residues 179 to 182 (RSAD), Asn-190, and 220 to 222 (HLY) contribute to the dUMP site. Asp-182 lines the (6R)-5,10-methylene-5,6,7,8-tetrahydrofolate pocket. Residue Ala-278 participates in (6R)-5,10-methylene-5,6,7,8-tetrahydrofolate binding.

The protein belongs to the thymidylate synthase family. Bacterial-type ThyA subfamily. As to quaternary structure, homodimer.

It localises to the cytoplasm. The catalysed reaction is dUMP + (6R)-5,10-methylene-5,6,7,8-tetrahydrofolate = 7,8-dihydrofolate + dTMP. Its pathway is pyrimidine metabolism; dTTP biosynthesis. Catalyzes the reductive methylation of 2'-deoxyuridine-5'-monophosphate (dUMP) to 2'-deoxythymidine-5'-monophosphate (dTMP) while utilizing 5,10-methylenetetrahydrofolate (mTHF) as the methyl donor and reductant in the reaction, yielding dihydrofolate (DHF) as a by-product. This enzymatic reaction provides an intracellular de novo source of dTMP, an essential precursor for DNA biosynthesis. This Marinobacter nauticus (strain ATCC 700491 / DSM 11845 / VT8) (Marinobacter aquaeolei) protein is Thymidylate synthase.